The sequence spans 1069 residues: Protocadherin-8 (1069 aa).

A signal peptide spans 1–29 (MSPVKRWGSPCLFPLQLFSLCWVLSVAQS). Cadherin domains lie at 30–135 (KTVR…APRF), 136–245 (PRAQ…SPAF), 247–354 (QGAV…APDI), 393–497 (QETG…APLF), 498–609 (TKPV…SPVL), and 615–721 (ANGS…VPAS). At 30–747 (KTVRYSTFEE…SGPSLQWDTP (718 aa)) the chain is on the extracellular side. Residue Asn-616 is glycosylated (N-linked (GlcNAc...) asparagine). The interval 719-738 (PASAGSPEHFRPPGSRLAPS) is disordered. A helical transmembrane segment spans residues 748–768 (LIVIIVLAGSCTLLLAAIIAI). Topologically, residues 769-1069 (ATTCNRRKKE…SPKKGTNENV (301 aa)) are cytoplasmic. Disordered stretches follow at residues 777–859 (KEVR…TGES), 905–927 (REAEKFSGKDSGKGDSDFNDSDS), and 1031–1069 (LSPPRPGRLPDLQEIGVPLYESPPGGRYVSPKKGTNENV). 2 stretches are compositionally biased toward basic and acidic residues: residues 780 to 790 (RKGGALREERP) and 905 to 920 (REAEKFSGKDSGKGDS). Ser-1052 is subject to Phosphoserine.

The N-terminal extracellular domain forms homophilic interactions; these interactions activate p38 MAPK via TAOK2 and trigger endocytosis. Interacts with CDH2; this interaction may lead to CDH2 cointernalization. Interacts with CDH11. Interacts with TAOK2. Enriched in brain relative to peripheral tissues, with low expression in the testis. Expressed in hippocampal neurons (at protein level).

The protein localises to the cell membrane. Its subcellular location is the cell projection. The protein resides in the dendrite. It is found in the presynaptic cell membrane. It localises to the postsynaptic cell membrane. Functionally, calcium-dependent cell-adhesion protein. May play a role in activity-induced synaptic reorganization underlying long term memory. Could be involved in CDH2 internalization through TAOK2/p38 MAPK pathway. In hippocampal neurons, may play a role in the down-regulation of dendritic spines, maybe through its action on CDH2 endocytosis. The protein is Protocadherin-8 (Pcdh8) of Rattus norvegicus (Rat).